The primary structure comprises 894 residues: Eukaryotic translation initiation factor 3 subunit C (894 aa).

Disordered regions lie at residues 1-28 (MSRF…KANK) and 162-235 (SDYR…VTKM). 3 stretches are compositionally biased toward acidic residues: residues 12-22 (SDTDSSEDEVE), 169-189 (DEDG…EEVP), and 203-214 (SESESDSDDDDS). Positions 215 to 224 (FNWSSEPDTN) are enriched in polar residues. One can recognise a PCI domain in the interval 625–801 (YHMHINVELM…DCLIMHRVEP (177 aa)). The disordered stretch occupies residues 824-894 (QILEPRTGRG…RRHPQKPRAF (71 aa)). Basic and acidic residues predominate over residues 845-854 (RNERQGDKQK). The span at 855–870 (GSGGFQGERRGGPGGP) shows a compositional bias: gly residues. Positions 884–894 (QRRHPQKPRAF) are enriched in basic residues.

This sequence belongs to the eIF-3 subunit C family. In terms of assembly, component of the eukaryotic translation initiation factor 3 (eIF-3) complex.

The protein resides in the cytoplasm. Its function is as follows. Component of the eukaryotic translation initiation factor 3 (eIF-3) complex, which is involved in protein synthesis of a specialized repertoire of mRNAs and, together with other initiation factors, stimulates binding of mRNA and methionyl-tRNAi to the 40S ribosome. The eIF-3 complex specifically targets and initiates translation of a subset of mRNAs involved in cell proliferation. This chain is Eukaryotic translation initiation factor 3 subunit C, found in Caenorhabditis briggsae.